The chain runs to 684 residues: Phenoloxidase 2 (684 aa).

Residues 1–51 (MSNTAVLNDLVALYDRPTEPMFRVKAKKSFKVPKEYVTDRFKNVAVEISNR) constitute a propeptide, removed by PPAF1. N-linked (GlcNAc...) asparagine glycosylation is found at Asn81 and Asn91. Positions 209, 213, and 238 each coordinate Cu cation. N-linked (GlcNAc...) asparagine glycosylation occurs at Asn330. The active-site Proton acceptor is the Glu350. 3 residues coordinate Cu cation: His365, His369, and His405. 4 N-linked (GlcNAc...) asparagine glycosylation sites follow: Asn416, Asn487, Asn491, and Asn546. Disulfide bonds link Cys581-Cys623 and Cys583-Cys630.

The protein belongs to the tyrosinase family. In terms of assembly, dimer. Might form a homodimer or a heterodimer with PPO1. Might interact with PPAF2 (via CLIP domain); the interaction might be required for PPO2 activity. Cu(2+) serves as cofactor. Precursor cleaved by PPAF1. Hemocytes.

It is found in the secreted. In terms of biological role, this is a copper-containing oxidase that functions in the formation of pigments such as melanins and other polyphenolic compounds. Catalyzes the oxidation of o-diphenols (N-acetyldopamine, 4-methylcatechol and dopamine). Cannot oxidize monophenols and p-phenols (L-tyrosine, tyramine, gentisic acid and hydroquinone). Binds to the surface of hemocytes and is involved in hemocyte melanization. Activation of the enzyme in response to bacterial lipopolysaccharides (LPS) suggests it may play a role in innate immunity. This is Phenoloxidase 2 from Holotrichia diomphalia (Korean black chafer).